The sequence spans 326 residues: Light-induced protein, chloroplastic (326 aa).

Residues 1-63 constitute a chloroplast transit peptide; sequence MASISSLNQI…TNPKPKFTAQ (63 aa).

Belongs to the LIPC family. Associates with the major light-harvesting antenna complex polypeptides of the PSII oxygen-evolving complex. As to expression, expressed in leaves.

The protein resides in the plastid. It is found in the chloroplast thylakoid membrane. Required for normal plant growth. May be both photoprotective and play an ancillary role in photosynthesis. May structurally stabilize thylakoids during osmotic and oxidative stress. This is Light-induced protein, chloroplastic from Solanum tuberosum (Potato).